Reading from the N-terminus, the 625-residue chain is Mesothelin (625 aa).

The first 35 residues, 1–35 (MALPTARPLLGSCGSPICSRSFLLLLLSLGWIPRL), serve as a signal peptide directing secretion. The N-linked (GlcNAc...) asparagine glycan is linked to N93. S202 bears the Phosphoserine mark. The cysteines at positions 304 and 328 are disulfide-linked. Residues N390, N488, and N517 are each glycosylated (N-linked (GlcNAc...) asparagine). The GPI-anchor amidated serine moiety is linked to residue S600. Positions 601 to 625 (SRASLLGPGFVLIWIPALLPALRLS) are cleaved as a propeptide — removed in mature form.

The protein belongs to the mesothelin family. In terms of assembly, interacts with MUC16. Post-translationally, proteolytically cleaved by a furin-like convertase to generate megakaryocyte-potentiating factor (MPF), and the cleaved form of mesothelin. In terms of tissue distribution, highly expressed in lung and heart. Expressed at low levels in spleen, liver, kidney and testis. Present in lung (at protein level).

The protein localises to the cell membrane. It localises to the golgi apparatus. The protein resides in the secreted. In terms of biological role, membrane-anchored forms may play a role in cellular adhesion. Its function is as follows. Megakaryocyte-potentiating factor (MPF) may potentiate megakaryocyte colony formation. The protein is Mesothelin (Msln) of Mus musculus (Mouse).